The sequence spans 131 residues: Phosphoribosyl-AMP cyclohydrolase (131 aa).

Aspartate 78 serves as a coordination point for Mg(2+). Cysteine 79 lines the Zn(2+) pocket. Mg(2+) is bound by residues aspartate 80 and aspartate 82. Zn(2+) is bound by residues cysteine 96 and cysteine 103.

This sequence belongs to the PRA-CH family. In terms of assembly, homodimer. It depends on Mg(2+) as a cofactor. Zn(2+) is required as a cofactor.

Its subcellular location is the cytoplasm. It catalyses the reaction 1-(5-phospho-beta-D-ribosyl)-5'-AMP + H2O = 1-(5-phospho-beta-D-ribosyl)-5-[(5-phospho-beta-D-ribosylamino)methylideneamino]imidazole-4-carboxamide. It functions in the pathway amino-acid biosynthesis; L-histidine biosynthesis; L-histidine from 5-phospho-alpha-D-ribose 1-diphosphate: step 3/9. Catalyzes the hydrolysis of the adenine ring of phosphoribosyl-AMP. This is Phosphoribosyl-AMP cyclohydrolase from Neisseria gonorrhoeae (strain ATCC 700825 / FA 1090).